The primary structure comprises 497 residues: Serine hydroxymethyltransferase (497 aa).

(6S)-5,6,7,8-tetrahydrofolate-binding positions include Leu176 and 180–182 (GHL). At Lys289 the chain carries N6-(pyridoxal phosphate)lysine.

This sequence belongs to the SHMT family. In terms of assembly, homodimer. Pyridoxal 5'-phosphate is required as a cofactor.

The protein resides in the cytoplasm. It carries out the reaction (6R)-5,10-methylene-5,6,7,8-tetrahydrofolate + glycine + H2O = (6S)-5,6,7,8-tetrahydrofolate + L-serine. Its pathway is one-carbon metabolism; tetrahydrofolate interconversion. It participates in amino-acid biosynthesis; glycine biosynthesis; glycine from L-serine: step 1/1. Its function is as follows. Catalyzes the reversible interconversion of serine and glycine with tetrahydrofolate (THF) serving as the one-carbon carrier. This reaction serves as the major source of one-carbon groups required for the biosynthesis of purines, thymidylate, methionine, and other important biomolecules. Also exhibits THF-independent aldolase activity toward beta-hydroxyamino acids, producing glycine and aldehydes, via a retro-aldol mechanism. This is Serine hydroxymethyltransferase from Chlamydia caviae (strain ATCC VR-813 / DSM 19441 / 03DC25 / GPIC) (Chlamydophila caviae).